The sequence spans 508 residues: GMP synthase [glutamine-hydrolyzing] (508 aa).

Positions 1–189 (MILVLDFGSQ…ALLVCGCEKT (189 aa)) constitute a Glutamine amidotransferase type-1 domain. Residue Cys78 is the Nucleophile of the active site. Active-site residues include His163 and Glu165. Residues 190 to 383 (WGMQHFAQKE…LGISQDFLMR (194 aa)) form the GMPS ATP-PPase domain. Residue 217–223 (SGGVDST) participates in ATP binding.

Homodimer.

The catalysed reaction is XMP + L-glutamine + ATP + H2O = GMP + L-glutamate + AMP + diphosphate + 2 H(+). Its pathway is purine metabolism; GMP biosynthesis; GMP from XMP (L-Gln route): step 1/1. Catalyzes the synthesis of GMP from XMP. The protein is GMP synthase [glutamine-hydrolyzing] of Helicobacter pylori (strain Shi470).